Reading from the N-terminus, the 199-residue chain is dCTP deaminase (199 aa).

DCTP is bound by residues 110 to 115 (RSSLAR), Asp-128, 136 to 138 (VLE), Tyr-171, and Gln-182. Glu-138 acts as the Proton donor/acceptor in catalysis.

Belongs to the dCTP deaminase family. As to quaternary structure, homotrimer.

The enzyme catalyses dCTP + H2O + H(+) = dUTP + NH4(+). Its pathway is pyrimidine metabolism; dUMP biosynthesis; dUMP from dCTP (dUTP route): step 1/2. Catalyzes the deamination of dCTP to dUTP. The polypeptide is dCTP deaminase (Pseudoalteromonas atlantica (strain T6c / ATCC BAA-1087)).